The following is a 442-amino-acid chain: MKLKERLAELIPQWRAEVAEIRKKYGNRKTMDCTIGHAYGGMRGLKALVCDTSEVFPDEGVKFRGYTIPELREGPHKLPTAEGGFEPLPEGLWYLLLTGELPTEEDVKEISAEFTKRMQNVPQYVFDVLRAMPVDTHPMTMFAAGILAMQRESVFAKRYEEGMRREEHWEAMLEDSLNMLAALPVIAAYIYRRKYKGDTHIAPDPNLDWSANLAHMMGFDDFEVYELFRLYMFLHSDHEGGNVSAHTNLLVNSAYSDIYRSFSAAMNGLAGPLHGLANQEVLRWIQMLYKKFGGVPTKEQLERFAWDTLNSGQVIPGYGHAVLRVTDPRYVAQRDFALKHLPDDELFKIVSLCYEVIPEVLKKHGKAKNPWPNVDAHSGVLLWHYGIREYDFYTVLFGVSRALGCTAQAILVRGYMLPIERPKSITTRWVKEVAESLPVAGS.

Active-site residues include histidine 274, histidine 320, and aspartate 375.

This sequence belongs to the citrate synthase family.

It carries out the reaction oxaloacetate + acetyl-CoA + H2O = citrate + CoA + H(+). It functions in the pathway carbohydrate metabolism; tricarboxylic acid cycle; isocitrate from oxaloacetate: step 1/2. Functionally, catalyzes both citrate generation and citrate cleavage. Part of a reversible tricarboxylic acid (TCA) cycle that can fix carbon dioxide autotrophically and may represent an ancestral mode of the conventional reductive TCA (rTCA) cycle. The direction is controlled by the available carbon source(s). The chain is Citrate synthase from Thermosulfidibacter takaii (strain DSM 17441 / JCM 13301 / NBRC 103674 / ABI70S6).